The chain runs to 279 residues: Small ribosomal subunit protein uS2 (279 aa).

Positions 232–279 (RRRGTDEKPEAGVASDEPLAEWERELLEEPKKSDEPKSDEQPAAAAAE) are disordered. Over residues 252-271 (EWERELLEEPKKSDEPKSDE) the composition is skewed to basic and acidic residues.

The protein belongs to the universal ribosomal protein uS2 family.

This is Small ribosomal subunit protein uS2 from Salinispora arenicola (strain CNS-205).